Consider the following 224-residue polypeptide: Ribonuclease 3 (224 aa).

One can recognise an RNase III domain in the interval 5–127; the sequence is LERLCRRLNY…ILAAIYLDGG (123 aa). Glutamate 40 is a binding site for Mg(2+). The active site involves aspartate 44. Aspartate 113 and glutamate 116 together coordinate Mg(2+). The active site involves glutamate 116. The region spanning 154–224 is the DRBM domain; that stretch reads DAKTQLQEFL…AKAMLEQLQG (71 aa).

The protein belongs to the ribonuclease III family. Homodimer. It depends on Mg(2+) as a cofactor.

It is found in the cytoplasm. The catalysed reaction is Endonucleolytic cleavage to 5'-phosphomonoester.. Digests double-stranded RNA. Involved in the processing of primary rRNA transcript to yield the immediate precursors to the large and small rRNAs (23S and 16S). Processes some mRNAs, and tRNAs when they are encoded in the rRNA operon. Processes pre-crRNA and tracrRNA of type II CRISPR loci if present in the organism. The sequence is that of Ribonuclease 3 from Legionella pneumophila subsp. pneumophila (strain Philadelphia 1 / ATCC 33152 / DSM 7513).